We begin with the raw amino-acid sequence, 156 residues long: Ribosomal RNA large subunit methyltransferase H (156 aa).

Residues Leu73, Gly104, and 123 to 128 contribute to the S-adenosyl-L-methionine site; that span reads ISSMTL.

Belongs to the RNA methyltransferase RlmH family. Homodimer.

Its subcellular location is the cytoplasm. The catalysed reaction is pseudouridine(1915) in 23S rRNA + S-adenosyl-L-methionine = N(3)-methylpseudouridine(1915) in 23S rRNA + S-adenosyl-L-homocysteine + H(+). Functionally, specifically methylates the pseudouridine at position 1915 (m3Psi1915) in 23S rRNA. The sequence is that of Ribosomal RNA large subunit methyltransferase H from Burkholderia ambifaria (strain MC40-6).